Reading from the N-terminus, the 308-residue chain is tRNA pseudouridine synthase B (308 aa).

Asp47 functions as the Nucleophile in the catalytic mechanism.

It belongs to the pseudouridine synthase TruB family. Type 1 subfamily.

The enzyme catalyses uridine(55) in tRNA = pseudouridine(55) in tRNA. In terms of biological role, responsible for synthesis of pseudouridine from uracil-55 in the psi GC loop of transfer RNAs. This chain is tRNA pseudouridine synthase B, found in Xanthomonas campestris pv. campestris (strain B100).